Here is an 892-residue protein sequence, read N- to C-terminus: Alanine--tRNA ligase (892 aa).

Residues histidine 577, histidine 581, cysteine 680, and histidine 684 each coordinate Zn(2+).

This sequence belongs to the class-II aminoacyl-tRNA synthetase family. Zn(2+) serves as cofactor.

The protein localises to the cytoplasm. The catalysed reaction is tRNA(Ala) + L-alanine + ATP = L-alanyl-tRNA(Ala) + AMP + diphosphate. Catalyzes the attachment of alanine to tRNA(Ala) in a two-step reaction: alanine is first activated by ATP to form Ala-AMP and then transferred to the acceptor end of tRNA(Ala). Also edits incorrectly charged Ser-tRNA(Ala) and Gly-tRNA(Ala) via its editing domain. The sequence is that of Alanine--tRNA ligase from Arthrobacter sp. (strain FB24).